We begin with the raw amino-acid sequence, 80 residues long: Putative membrane protein insertion efficiency factor (80 aa).

This sequence belongs to the UPF0161 family.

Its subcellular location is the cell inner membrane. Functionally, could be involved in insertion of integral membrane proteins into the membrane. In Paracoccus denitrificans (strain Pd 1222), this protein is Putative membrane protein insertion efficiency factor.